The sequence spans 349 residues: Succinylglutamate desuccinylase (349 aa).

Residues His-70, Glu-73, and His-166 each coordinate Zn(2+). Glu-229 is an active-site residue.

It belongs to the AspA/AstE family. Succinylglutamate desuccinylase subfamily. It depends on Zn(2+) as a cofactor.

The enzyme catalyses N-succinyl-L-glutamate + H2O = L-glutamate + succinate. It functions in the pathway amino-acid degradation; L-arginine degradation via AST pathway; L-glutamate and succinate from L-arginine: step 5/5. In terms of biological role, transforms N(2)-succinylglutamate into succinate and glutamate. This Burkholderia pseudomallei (strain 1710b) protein is Succinylglutamate desuccinylase.